We begin with the raw amino-acid sequence, 244 residues long: Carbonyl reductase [NADPH] 2 (244 aa).

NADP(+) is bound at residue 11–39 (LVTGAGKGIGRDTVKALHASGAKVVAVTR). Phosphoserine is present on Ser42. Residue Ser136 participates in substrate binding. Tyr149 functions as the Proton acceptor in the catalytic mechanism. Ser176 is modified (phosphoserine).

This sequence belongs to the short-chain dehydrogenases/reductases (SDR) family. Homotetramer. In terms of tissue distribution, predominantly expressed in lung, in ciliated cells, non-ciliated bronchiolar cells and type-II alveolar pneumocytes. Also detected in adipose tissue (at protein level). Low expression in testis, heart, kidney, spleen, brain and liver.

The protein localises to the mitochondrion matrix. The catalysed reaction is a secondary alcohol + NADP(+) = a ketone + NADPH + H(+). In terms of biological role, may function in the pulmonary metabolism of endogenous carbonyl compounds, such as aliphatic aldehydes and ketones derived from lipid peroxidation, 3-ketosteroids and fatty aldehydes, as well as in xenobiotic metabolism. The protein is Carbonyl reductase [NADPH] 2 (Cbr2) of Mus musculus (Mouse).